We begin with the raw amino-acid sequence, 321 residues long: Polyamine aminopropyltransferase (321 aa).

Positions His-23–Asp-256 constitute a PABS domain. Gln-53 provides a ligand contact to S-methyl-5'-thioadenosine. His-84 and Asp-108 together coordinate spermidine. S-methyl-5'-thioadenosine is bound by residues Glu-127 and Asp-159–Gly-160. The active-site Proton acceptor is Asp-177.

Belongs to the spermidine/spermine synthase family. In terms of assembly, homodimer or homotetramer.

It is found in the cytoplasm. The enzyme catalyses S-adenosyl 3-(methylsulfanyl)propylamine + putrescine = S-methyl-5'-thioadenosine + spermidine + H(+). It participates in amine and polyamine biosynthesis; spermidine biosynthesis; spermidine from putrescine: step 1/1. Its function is as follows. Catalyzes the irreversible transfer of a propylamine group from the amino donor S-adenosylmethioninamine (decarboxy-AdoMet) to putrescine (1,4-diaminobutane) to yield spermidine. The protein is Polyamine aminopropyltransferase of Korarchaeum cryptofilum (strain OPF8).